Reading from the N-terminus, the 49-residue chain is Large ribosomal subunit protein bL33 (49 aa).

This sequence belongs to the bacterial ribosomal protein bL33 family.

This chain is Large ribosomal subunit protein bL33, found in Syntrophus aciditrophicus (strain SB).